Here is a 240-residue protein sequence, read N- to C-terminus: Membrane-spanning 4-domains subfamily A member 7 (240 aa).

Residues 1-47 (MLLQSQTMGVSHSFTPKGITIPQREKPGHMYQNEDYLQNGLPTETTV) lie on the Cytoplasmic side of the membrane. Residues 48–68 (LGTVQILCCLLISSLGAILVF) traverse the membrane as a helical segment. Topologically, residues 69 to 83 (APYPSHFNPAISTTL) are extracellular. The helical transmembrane segment at 84–104 (MSGYPFLGALCFGITGSLSII) threads the bilayer. Residues 105-121 (SGKQSTKPFDLSSLTSN) are Cytoplasmic-facing. A helical transmembrane segment spans residues 122–142 (AVSSVTAGAGLFLLADSMVAL). Over 143 to 178 (RTASQHCGSEMDYLSSLPYSEYYYPIYEIKDCLLTS) the chain is Extracellular. Residues 179–199 (VSLTGVLVVMLIFTVLELLLA) form a helical membrane-spanning segment. Residues 200–240 (AYSSVFWWKQLYSNNPGSSFSSTQSQDHIQQVKKSSSRSWI) lie on the Cytoplasmic side of the membrane. A disordered region spans residues 218–240 (SFSSTQSQDHIQQVKKSSSRSWI).

It belongs to the MS4A family. In terms of tissue distribution, ubiquitous expression in normal tissues. Expression is more elevated in adult liver, lung, spleen, and heart than in their fetal counterparts, and is higher in normal tissues than in the cancerous tissue or cell lines. Low levels of expression were detected in the promonocytic stage, whereas high levels of expression were detected in mature monocytes.

It localises to the membrane. Functionally, may be involved in signal transduction as a component of a multimeric receptor complex. The sequence is that of Membrane-spanning 4-domains subfamily A member 7 (MS4A7) from Homo sapiens (Human).